The sequence spans 101 residues: Urease subunit beta (101 aa).

The protein belongs to the urease beta subunit family. As to quaternary structure, heterotrimer of UreA (gamma), UreB (beta) and UreC (alpha) subunits. Three heterotrimers associate to form the active enzyme.

It localises to the cytoplasm. It catalyses the reaction urea + 2 H2O + H(+) = hydrogencarbonate + 2 NH4(+). It functions in the pathway nitrogen metabolism; urea degradation; CO(2) and NH(3) from urea (urease route): step 1/1. The polypeptide is Urease subunit beta (Ectopseudomonas mendocina (strain ymp) (Pseudomonas mendocina)).